We begin with the raw amino-acid sequence, 127 residues long: Aspartate 1-decarboxylase (127 aa).

S25 acts as the Schiff-base intermediate with substrate; via pyruvic acid in catalysis. Position 25 is a pyruvic acid (Ser) (S25). T57 contributes to the substrate binding site. The active-site Proton donor is Y58. Substrate is bound at residue 73–75 (GAA).

This sequence belongs to the PanD family. In terms of assembly, heterooctamer of four alpha and four beta subunits. Requires pyruvate as cofactor. Post-translationally, is synthesized initially as an inactive proenzyme, which is activated by self-cleavage at a specific serine bond to produce a beta-subunit with a hydroxyl group at its C-terminus and an alpha-subunit with a pyruvoyl group at its N-terminus.

The protein localises to the cytoplasm. It carries out the reaction L-aspartate + H(+) = beta-alanine + CO2. The protein operates within cofactor biosynthesis; (R)-pantothenate biosynthesis; beta-alanine from L-aspartate: step 1/1. Its function is as follows. Catalyzes the pyruvoyl-dependent decarboxylation of aspartate to produce beta-alanine. The polypeptide is Aspartate 1-decarboxylase (Staphylococcus aureus (strain JH1)).